A 226-amino-acid polypeptide reads, in one-letter code: Transcriptional regulatory protein DpiA (226 aa).

The region spanning 6–122 is the Response regulatory domain; sequence TLLIVEDETP…RLGQTLTRFR (117 aa). D57 is modified (4-aspartylphosphate). The H-T-H motif DNA-binding region spans 180–199; the sequence is AETVAQALTISRTTARRYLE.

In terms of processing, phosphorylated and activated by DpiB.

The protein localises to the cytoplasm. Its function is as follows. Member of the two-component regulatory system DpiA/DpiB, which is essential for expression of citrate-specific fermentation genes and genes involved in plasmid inheritance. Could be involved in response to both the presence of citrate and external redox conditions. This is Transcriptional regulatory protein DpiA (dpiA) from Escherichia coli O157:H7.